A 376-amino-acid polypeptide reads, in one-letter code: Chaperone protein DnaJ (376 aa).

The J domain occupies 5–69; it reads DYYEVLGISK…QKRAQYDQYG (65 aa). The CR-type zinc-finger motif lies at 133–215; it reads GKDAEIEIPR…CHGKGRVTKT (83 aa). The Zn(2+) site is built by Cys146, Cys149, Cys163, Cys166, Cys189, Cys192, Cys203, and Cys206. CXXCXGXG motif repeat units lie at residues 146-153, 163-170, 189-196, and 203-210; these read CDTCHGSG, CSHCGGKG, CQYCNGTG, and CPTCHGKG.

This sequence belongs to the DnaJ family. Homodimer. The cofactor is Zn(2+).

It localises to the cytoplasm. Its function is as follows. Participates actively in the response to hyperosmotic and heat shock by preventing the aggregation of stress-denatured proteins and by disaggregating proteins, also in an autonomous, DnaK-independent fashion. Unfolded proteins bind initially to DnaJ; upon interaction with the DnaJ-bound protein, DnaK hydrolyzes its bound ATP, resulting in the formation of a stable complex. GrpE releases ADP from DnaK; ATP binding to DnaK triggers the release of the substrate protein, thus completing the reaction cycle. Several rounds of ATP-dependent interactions between DnaJ, DnaK and GrpE are required for fully efficient folding. Also involved, together with DnaK and GrpE, in the DNA replication of plasmids through activation of initiation proteins. This Listeria monocytogenes serotype 4a (strain HCC23) protein is Chaperone protein DnaJ.